The primary structure comprises 29 residues: NAD(P)H-quinone oxidoreductase subunit 5, chloroplastic (29 aa).

The helical transmembrane segment at 1 to 15 (SGSIIHSMEANVGYS) threads the bilayer.

It belongs to the complex I subunit 5 family. In terms of assembly, NDH is composed of at least 16 different subunits, 5 of which are encoded in the nucleus.

Its subcellular location is the plastid. The protein localises to the chloroplast thylakoid membrane. It carries out the reaction a plastoquinone + NADH + (n+1) H(+)(in) = a plastoquinol + NAD(+) + n H(+)(out). The enzyme catalyses a plastoquinone + NADPH + (n+1) H(+)(in) = a plastoquinol + NADP(+) + n H(+)(out). Functionally, NDH shuttles electrons from NAD(P)H:plastoquinone, via FMN and iron-sulfur (Fe-S) centers, to quinones in the photosynthetic chain and possibly in a chloroplast respiratory chain. The immediate electron acceptor for the enzyme in this species is believed to be plastoquinone. Couples the redox reaction to proton translocation, and thus conserves the redox energy in a proton gradient. The polypeptide is NAD(P)H-quinone oxidoreductase subunit 5, chloroplastic (Pseudotsuga menziesii (Douglas-fir)).